We begin with the raw amino-acid sequence, 459 residues long: Argininosuccinate lyase (459 aa).

The protein belongs to the lyase 1 family. Argininosuccinate lyase subfamily.

Its subcellular location is the cytoplasm. It catalyses the reaction 2-(N(omega)-L-arginino)succinate = fumarate + L-arginine. Its pathway is amino-acid biosynthesis; L-arginine biosynthesis; L-arginine from L-ornithine and carbamoyl phosphate: step 3/3. The chain is Argininosuccinate lyase from Geobacillus thermodenitrificans (strain NG80-2).